The sequence spans 515 residues: 1-pyrroline-5-carboxylate dehydrogenase (515 aa).

Residues glutamate 286 and cysteine 320 contribute to the active site.

Belongs to the aldehyde dehydrogenase family. RocA subfamily.

It catalyses the reaction L-glutamate 5-semialdehyde + NAD(+) + H2O = L-glutamate + NADH + 2 H(+). The protein operates within amino-acid degradation; L-proline degradation into L-glutamate; L-glutamate from L-proline: step 2/2. In Bacillus mycoides (strain KBAB4) (Bacillus weihenstephanensis), this protein is 1-pyrroline-5-carboxylate dehydrogenase.